Consider the following 635-residue polypeptide: Leucine aminopeptidase 2-2 (635 aa).

Residues 141 to 143 (QCQ) and 265 to 270 (PYGGME) each bind substrate. A Zn(2+)-binding site is contributed by histidine 294. The Proton acceptor role is filled by glutamate 295. Residues histidine 298 and glutamate 317 each contribute to the Zn(2+) site. Catalysis depends on tyrosine 399, which acts as the Proton donor.

It belongs to the peptidase M1 family. The cofactor is Zn(2+).

It localises to the cytoplasm. The protein resides in the nucleus. The enzyme catalyses an epoxide + H2O = an ethanediol. Its function is as follows. Aminopeptidase that preferentially cleaves di- and tripeptides. Also has low epoxide hydrolase activity (in vitro). Can hydrolyze the epoxide leukotriene LTA(4) but it forms preferentially 5,6-dihydroxy-7,9,11,14-eicosatetraenoic acid rather than the cytokine leukotriene B(4) as the product compared to the homologous mammalian enzyme (in vitro). The chain is Leucine aminopeptidase 2-2 (LTA4) from Scheffersomyces stipitis (strain ATCC 58785 / CBS 6054 / NBRC 10063 / NRRL Y-11545) (Yeast).